Consider the following 159-residue polypeptide: Ribosomal RNA large subunit methyltransferase H (159 aa).

S-adenosyl-L-methionine-binding positions include L76, G108, and 127-132 (FGRLTY).

It belongs to the RNA methyltransferase RlmH family. As to quaternary structure, homodimer.

It is found in the cytoplasm. The enzyme catalyses pseudouridine(1915) in 23S rRNA + S-adenosyl-L-methionine = N(3)-methylpseudouridine(1915) in 23S rRNA + S-adenosyl-L-homocysteine + H(+). Functionally, specifically methylates the pseudouridine at position 1915 (m3Psi1915) in 23S rRNA. The sequence is that of Ribosomal RNA large subunit methyltransferase H from Enterococcus faecalis (strain ATCC 700802 / V583).